The primary structure comprises 36 residues: U4-ctenitoxin-Pr1a (36 aa).

3 disulfides stabilise this stretch: C3–C17, C10–C22, and C16–C34.

As to expression, expressed by the venom gland.

The protein localises to the secreted. Its function is as follows. Neurotoxin. Causes spastic paralysis and death in mice. Moderate inhibitor of L-type calcium channels (Cav1/CACNA1). The polypeptide is U4-ctenitoxin-Pr1a (Phoneutria reidyi (Brazilian Amazonian armed spider)).